Reading from the N-terminus, the 508-residue chain is Steroid 17-alpha-hydroxylase/17,20 lyase (508 aa).

Cysteine 442 contributes to the heme binding site.

Belongs to the cytochrome P450 family. Requires heme as cofactor.

It localises to the endoplasmic reticulum membrane. Its subcellular location is the microsome membrane. The enzyme catalyses a C21-steroid + reduced [NADPH--hemoprotein reductase] + O2 = a 17alpha-hydroxy-C21-steroid + oxidized [NADPH--hemoprotein reductase] + H2O + H(+). It catalyses the reaction progesterone + reduced [NADPH--hemoprotein reductase] + O2 = 17alpha-hydroxyprogesterone + oxidized [NADPH--hemoprotein reductase] + H2O + H(+). It carries out the reaction pregnenolone + reduced [NADPH--hemoprotein reductase] + O2 = 17alpha-hydroxypregnenolone + oxidized [NADPH--hemoprotein reductase] + H2O + H(+). The catalysed reaction is 17alpha-hydroxyprogesterone + reduced [NADPH--hemoprotein reductase] + O2 = androst-4-ene-3,17-dione + acetate + oxidized [NADPH--hemoprotein reductase] + H2O + 2 H(+). The enzyme catalyses 17alpha-hydroxyprogesterone + reduced [NADPH--hemoprotein reductase] + O2 = 16alpha,17alpha-dihydroxyprogesterone + oxidized [NADPH--hemoprotein reductase] + H2O + H(+). It catalyses the reaction 16alpha,17alpha-dihydroxyprogesterone + reduced [NADPH--hemoprotein reductase] + O2 = 6beta,16alpha,17alpha-trihydroxyprogesterone + oxidized [NADPH--hemoprotein reductase] + H2O + H(+). It carries out the reaction 17alpha-hydroxypregnenolone + reduced [NADPH--hemoprotein reductase] + O2 = 3beta-hydroxyandrost-5-en-17-one + acetate + oxidized [NADPH--hemoprotein reductase] + H2O + 2 H(+). The catalysed reaction is 16alpha,17alpha-dihydroxypregnenolone + reduced [NADPH--hemoprotein reductase] + O2 = 3beta,16alpha-dihydroxy-androst-5-en-17-one + acetate + oxidized [NADPH--hemoprotein reductase] + H2O + 2 H(+). The enzyme catalyses 3beta-hydroxyandrost-5-en-17-one + reduced [NADPH--hemoprotein reductase] + O2 = 3beta,16alpha-dihydroxy-androst-5-en-17-one + oxidized [NADPH--hemoprotein reductase] + H2O + H(+). It catalyses the reaction androst-4-ene-3,17-dione + reduced [NADPH--hemoprotein reductase] + O2 = 16alpha-hydroxyandrost-4-ene-3,17-dione + oxidized [NADPH--hemoprotein reductase] + H2O + H(+). It participates in steroid hormone biosynthesis. It functions in the pathway steroid biosynthesis; glucocorticoid biosynthesis. Regulated predominantly by intracellular cAMP levels. The 17,20-lyase activity is stimulated by cytochrome b5, which acts as an allosteric effector increasing the Vmax of the lyase activity. In terms of biological role, a cytochrome P450 monooxygenase involved in corticoid and androgen biosynthesis. Catalyzes 17-alpha hydroxylation of C21 steroids, which is common for both pathways. A second oxidative step, required only for androgen synthesis, involves an acyl-carbon cleavage. The 17-alpha hydroxy intermediates, as part of adrenal glucocorticoids biosynthesis pathway, are precursors of cortisol. Hydroxylates steroid hormones, pregnenolone and progesterone to form 17-alpha hydroxy metabolites, followed by the cleavage of the C17-C20 bond to form C19 steroids, dehydroepiandrosterone (DHEA) and androstenedione. Has 16-alpha hydroxylase activity. Catalyzes 16-alpha hydroxylation of 17-alpha hydroxy pregnenolone, followed by the cleavage of the C17-C20 bond to form 16-alpha-hydroxy DHEA. Also 16-alpha hydroxylates androgens, relevant for estriol synthesis. Mechanistically, uses molecular oxygen inserting one oxygen atom into a substrate, and reducing the second into a water molecule, with two electrons provided by NADPH via cytochrome P450 reductase (CPR; NADPH-ferrihemoprotein reductase). The polypeptide is Steroid 17-alpha-hydroxylase/17,20 lyase (CYP17A1) (Equus caballus (Horse)).